The following is a 288-amino-acid chain: ATP phosphoribosyltransferase (288 aa).

This sequence belongs to the ATP phosphoribosyltransferase family. Long subfamily. Requires Mg(2+) as cofactor.

Its subcellular location is the cytoplasm. It carries out the reaction 1-(5-phospho-beta-D-ribosyl)-ATP + diphosphate = 5-phospho-alpha-D-ribose 1-diphosphate + ATP. The protein operates within amino-acid biosynthesis; L-histidine biosynthesis; L-histidine from 5-phospho-alpha-D-ribose 1-diphosphate: step 1/9. Its activity is regulated as follows. Feedback inhibited by histidine. Its function is as follows. Catalyzes the condensation of ATP and 5-phosphoribose 1-diphosphate to form N'-(5'-phosphoribosyl)-ATP (PR-ATP). Has a crucial role in the pathway because the rate of histidine biosynthesis seems to be controlled primarily by regulation of HisG enzymatic activity. The chain is ATP phosphoribosyltransferase from Methanococcus maripaludis (strain DSM 14266 / JCM 13030 / NBRC 101832 / S2 / LL).